Reading from the N-terminus, the 174-residue chain is Nucleoside-triphosphatase THEP1 (174 aa).

ATP-binding positions include 7-14 and 94-101; these read GRPGVGKT and LIIVDEIG.

This sequence belongs to the THEP1 NTPase family.

The enzyme catalyses a ribonucleoside 5'-triphosphate + H2O = a ribonucleoside 5'-diphosphate + phosphate + H(+). In terms of biological role, has nucleotide phosphatase activity towards ATP, GTP, CTP, TTP and UTP. May hydrolyze nucleoside diphosphates with lower efficiency. The protein is Nucleoside-triphosphatase THEP1 of Thermotoga maritima (strain ATCC 43589 / DSM 3109 / JCM 10099 / NBRC 100826 / MSB8).